We begin with the raw amino-acid sequence, 63 residues long: Large ribosomal subunit protein uL29 (63 aa).

It belongs to the universal ribosomal protein uL29 family.

This is Large ribosomal subunit protein uL29 from Erwinia tasmaniensis (strain DSM 17950 / CFBP 7177 / CIP 109463 / NCPPB 4357 / Et1/99).